We begin with the raw amino-acid sequence, 621 residues long: uncharacterized protein (621 aa).

The next 3 helical transmembrane spans lie at 240-260 (FFDA…NLLW), 548-568 (LGIV…VWTV), and 587-607 (VIIG…LTFM).

The protein localises to the cell membrane. This is an uncharacterized protein from Mycoplasma pneumoniae (strain ATCC 29342 / M129 / Subtype 1) (Mycoplasmoides pneumoniae).